We begin with the raw amino-acid sequence, 43 residues long: Lanthionine-containing peptide SapB (43 aa).

The N-terminal stretch at 1–21 (MALLDLQAMDTPAEDSFGELA) is a signal peptide. 2 consecutive cross-links (lanthionine (Ser-Cys)) follow at residues 24-31 (SQVSLLVC) and 34-41 (SSLSVVLC). 2,3-didehydroalanine (Ser) is present on residues serine 27 and serine 37.

Belongs to the lanthionine-containing morphogen protein family. Maturation involves the enzymatic conversion of Ser into dehydrated AA and the formation of thioether bonds with cysteine. This is followed by membrane translocation and cleavage of the modified precursor.

Functionally, lanthionine-containing peptide devoid of antibiotic properties, involved in the formation of aerial mycelium. Suggested to self-assemble at air-water interfaces, thus providing a film of surfactant through which nascent aerial hyphae can emerge. The aerial hyphae differentiate further into spores. The chain is Lanthionine-containing peptide SapB (ramS) from Streptomyces griseus subsp. griseus (strain JCM 4626 / CBS 651.72 / NBRC 13350 / KCC S-0626 / ISP 5235).